We begin with the raw amino-acid sequence, 256 residues long: Putative transposase for insertion sequence element IS112 (256 aa).

This sequence belongs to the transposase 11 family.

Involved in the transposition of the insertion sequence IS112 which inactivates the SalI restriction-modification system. This chain is Putative transposase for insertion sequence element IS112, found in Streptomyces albus G.